Here is an 878-residue protein sequence, read N- to C-terminus: Probable glucan endo-1,3-beta-glucosidase ARB_02077 (878 aa).

The signal sequence occupies residues 1–27 (MARGLVSSLLLGQLLLVLVGLFSPAGA). 4 N-linked (GlcNAc...) asparagine glycosylation sites follow: asparagine 228, asparagine 257, asparagine 290, and asparagine 297. The segment at 373-472 (AGSGSKAKRL…TACPSAPVTK (100 aa)) is disordered. Residues 400-416 (APAPQPPAQSTAPPYPI) show a composition bias toward pro residues. The span at 433–452 (VPTRVPTGGVPSGTTGTAPS) shows a compositional bias: low complexity. N-linked (GlcNAc...) asparagine glycans are attached at residues asparagine 505, asparagine 659, asparagine 795, and asparagine 862.

It belongs to the glycosyl hydrolase 55 family.

It is found in the secreted. The enzyme catalyses Hydrolysis of (1-&gt;3)-beta-D-glucosidic linkages in (1-&gt;3)-beta-D-glucans.. Probable glucan endo-1,3-beta-glucosidase involved in the hydrolysis of fungal cell wall. Classified as a small-oligosaccharide-producing type based its the end products: glucose, laminaribiose or laminaritetraose. The chain is Probable glucan endo-1,3-beta-glucosidase ARB_02077 from Arthroderma benhamiae (strain ATCC MYA-4681 / CBS 112371) (Trichophyton mentagrophytes).